The following is a 120-amino-acid chain: Putative pterin-4-alpha-carbinolamine dehydratase (120 aa).

Belongs to the pterin-4-alpha-carbinolamine dehydratase family.

The enzyme catalyses (4aS,6R)-4a-hydroxy-L-erythro-5,6,7,8-tetrahydrobiopterin = (6R)-L-erythro-6,7-dihydrobiopterin + H2O. The sequence is that of Putative pterin-4-alpha-carbinolamine dehydratase from Bdellovibrio bacteriovorus (strain ATCC 15356 / DSM 50701 / NCIMB 9529 / HD100).